The sequence spans 252 residues: MQKLVLGVEYDGSMYCGWQKQKCVSSIQSCLEYALSKVSSESILVFCGGRTDSGVHALEQIVHFETQLKCSRSAWTLGVNCHLPNDICVRWVSEVDNSFHARFSAISRRYCYFIYNNRIRSAVFCKRVWSYSRFLDVNKMSKAAQYLLGENDFSVFRSSGSQSCSTNRNIYHLRVIRQGHYVVIDIRANAFLYRMVRNIVGSLVEVGCGNKPVTWILELLKNYRGSLNRITAPASGLYLVEIKYPRYYLFQK.

Asp-52 acts as the Nucleophile in catalysis. Substrate is bound at residue Tyr-110.

The protein belongs to the tRNA pseudouridine synthase TruA family. Homodimer.

The catalysed reaction is uridine(38/39/40) in tRNA = pseudouridine(38/39/40) in tRNA. Functionally, formation of pseudouridine at positions 38, 39 and 40 in the anticodon stem and loop of transfer RNAs. The polypeptide is tRNA pseudouridine synthase A (Blochmanniella floridana).